The sequence spans 163 residues: Nucleotide-binding protein Mflv_5248 (163 aa).

The protein belongs to the YajQ family.

Its function is as follows. Nucleotide-binding protein. The polypeptide is Nucleotide-binding protein Mflv_5248 (Mycolicibacterium gilvum (strain PYR-GCK) (Mycobacterium gilvum (strain PYR-GCK))).